The sequence spans 154 residues: Aspartate carbamoyltransferase regulatory chain (154 aa).

Residues Cys109, Cys114, Cys138, and Cys141 each coordinate Zn(2+).

Belongs to the PyrI family. As to quaternary structure, contains catalytic and regulatory chains. The cofactor is Zn(2+).

Involved in allosteric regulation of aspartate carbamoyltransferase. This Aeromonas salmonicida (strain A449) protein is Aspartate carbamoyltransferase regulatory chain.